Consider the following 840-residue polypeptide: Protein translocase subunit SecA (840 aa).

Residues glutamine 87, 105 to 109, and aspartate 494 each bind ATP; that span reads GEGKT. The disordered stretch occupies residues 791–840; sequence LRKEQEDQPMFFGPAEGAGQKPQTRKDRKVGRNDPCPCGSGKKYKKCCGK. Zn(2+) contacts are provided by cysteine 826, cysteine 828, cysteine 837, and cysteine 838.

This sequence belongs to the SecA family. As to quaternary structure, monomer and homodimer. Part of the essential Sec protein translocation apparatus which comprises SecA, SecYEG and auxiliary proteins SecDF-YajC and YidC. The cofactor is Zn(2+).

The protein resides in the cell inner membrane. It is found in the cytoplasm. The enzyme catalyses ATP + H2O + cellular proteinSide 1 = ADP + phosphate + cellular proteinSide 2.. Functionally, part of the Sec protein translocase complex. Interacts with the SecYEG preprotein conducting channel. Has a central role in coupling the hydrolysis of ATP to the transfer of proteins into and across the cell membrane, serving as an ATP-driven molecular motor driving the stepwise translocation of polypeptide chains across the membrane. The sequence is that of Protein translocase subunit SecA from Syntrophobacter fumaroxidans (strain DSM 10017 / MPOB).